The primary structure comprises 336 residues: Probable deoxyhypusine synthase (336 aa).

Lysine 308 functions as the Nucleophile in the catalytic mechanism.

This sequence belongs to the deoxyhypusine synthase family. Requires NAD(+) as cofactor.

It carries out the reaction [eIF5A protein]-L-lysine + spermidine = [eIF5A protein]-deoxyhypusine + propane-1,3-diamine. It participates in protein modification; eIF5A hypusination. Functionally, catalyzes the NAD-dependent oxidative cleavage of spermidine and the subsequent transfer of the butylamine moiety of spermidine to the epsilon-amino group of a specific lysine residue of the eIF-5A precursor protein to form the intermediate deoxyhypusine residue. The protein is Probable deoxyhypusine synthase of Thermococcus gammatolerans (strain DSM 15229 / JCM 11827 / EJ3).